Reading from the N-terminus, the 62-residue chain is Large ribosomal subunit protein bL28 (62 aa).

It belongs to the bacterial ribosomal protein bL28 family.

The chain is Large ribosomal subunit protein bL28 from Helicobacter pylori (strain P12).